A 217-amino-acid chain; its full sequence is Somatotropin (217 aa).

Positions 1–26 (MAPGSRTSLLLAFGLLCLPWLQEGSA) are cleaved as a signal peptide. Zn(2+) is bound at residue His-44. Cys-79 and Cys-191 are disulfide-bonded. A Phosphoserine modification is found at Ser-132. Glu-200 lines the Zn(2+) pocket. Cys-208 and Cys-215 are joined by a disulfide.

This sequence belongs to the somatotropin/prolactin family.

The protein localises to the secreted. Plays an important role in growth control. Its major role in stimulating body growth is to stimulate the liver and other tissues to secrete IGF1. It stimulates both the differentiation and proliferation of myoblasts. It also stimulates amino acid uptake and protein synthesis in muscle and other tissues. In Pan troglodytes (Chimpanzee), this protein is Somatotropin (GH1).